We begin with the raw amino-acid sequence, 153 residues long: uncharacterized protein (153 aa).

The next 3 helical transmembrane spans lie at 17 to 37 (ITLI…SMFF), 44 to 64 (FLLC…IGMG), and 118 to 138 (FVFI…TLII).

To M.jannaschii MJ0129 and MJ0554.

It is found in the cell membrane. This is an uncharacterized protein from Methanocaldococcus jannaschii (strain ATCC 43067 / DSM 2661 / JAL-1 / JCM 10045 / NBRC 100440) (Methanococcus jannaschii).